Consider the following 346-residue polypeptide: Ferredoxin--NADP reductase (346 aa).

The FAD site is built by Glu35, Gln43, Tyr48, Val88, Phe122, Asp287, and Thr327.

This sequence belongs to the ferredoxin--NADP reductase type 2 family. Homodimer. Requires FAD as cofactor.

It carries out the reaction 2 reduced [2Fe-2S]-[ferredoxin] + NADP(+) + H(+) = 2 oxidized [2Fe-2S]-[ferredoxin] + NADPH. The protein is Ferredoxin--NADP reductase of Oenococcus oeni (strain ATCC BAA-331 / PSU-1).